Here is a 725-residue protein sequence, read N- to C-terminus: Catalase-peroxidase 1 (725 aa).

Positions 96–224 (WHSAGSYRLA…LAAVQMGLIY (129 aa)) form a cross-link, tryptophyl-tyrosyl-methioninium (Trp-Tyr) (with M-250). His97 functions as the Proton acceptor in the catalytic mechanism. The segment at residues 224 to 250 (YVNPEGVDGNPDPLRTAKDVRETFKRM) is a cross-link (tryptophyl-tyrosyl-methioninium (Tyr-Met) (with W-96)). Residue His265 coordinates heme b.

It belongs to the peroxidase family. Peroxidase/catalase subfamily. As to quaternary structure, homodimer or homotetramer. Heme b is required as a cofactor. Formation of the three residue Trp-Tyr-Met cross-link is important for the catalase, but not the peroxidase activity of the enzyme.

It catalyses the reaction H2O2 + AH2 = A + 2 H2O. The catalysed reaction is 2 H2O2 = O2 + 2 H2O. In terms of biological role, bifunctional enzyme with both catalase and broad-spectrum peroxidase activity. This Idiomarina loihiensis (strain ATCC BAA-735 / DSM 15497 / L2-TR) protein is Catalase-peroxidase 1.